Reading from the N-terminus, the 114-residue chain is UPF0342 protein OEOE_0901 (114 aa).

Belongs to the UPF0342 family.

This chain is UPF0342 protein OEOE_0901, found in Oenococcus oeni (strain ATCC BAA-331 / PSU-1).